The following is a 1316-amino-acid chain: DNA-directed RNA polymerase subunit beta' (1316 aa).

The Zn(2+) site is built by Cys-60, Cys-62, Cys-75, and Cys-78. Residues Asp-535, Asp-537, and Asp-539 each coordinate Mg(2+). 4 residues coordinate Zn(2+): Cys-891, Cys-968, Cys-975, and Cys-978.

This sequence belongs to the RNA polymerase beta' chain family. The RNAP catalytic core consists of 2 alpha, 1 beta, 1 beta' and 1 omega subunit. When a sigma factor is associated with the core the holoenzyme is formed, which can initiate transcription. Requires Mg(2+) as cofactor. Zn(2+) is required as a cofactor.

It catalyses the reaction RNA(n) + a ribonucleoside 5'-triphosphate = RNA(n+1) + diphosphate. DNA-dependent RNA polymerase catalyzes the transcription of DNA into RNA using the four ribonucleoside triphosphates as substrates. The sequence is that of DNA-directed RNA polymerase subunit beta' from Mycobacterium leprae (strain Br4923).